The sequence spans 334 residues: Protein-glutamate methylesterase/protein-glutamine glutaminase 2 (334 aa).

The region spanning 2–120 (NIGIVNDLPL…GAAGDTTKLL (119 aa)) is the Response regulatory domain. Asp-53 carries the 4-aspartylphosphate modification. The CheB-type methylesterase domain occupies 134-334 (PGSSRLAGAA…AGELAALARI (201 aa)). Active-site residues include Ser-157, His-184, and Asp-277.

Belongs to the CheB family. Post-translationally, phosphorylated by CheA. Phosphorylation of the N-terminal regulatory domain activates the methylesterase activity.

It localises to the cytoplasm. It catalyses the reaction [protein]-L-glutamate 5-O-methyl ester + H2O = L-glutamyl-[protein] + methanol + H(+). The enzyme catalyses L-glutaminyl-[protein] + H2O = L-glutamyl-[protein] + NH4(+). Functionally, involved in chemotaxis. Part of a chemotaxis signal transduction system that modulates chemotaxis in response to various stimuli. Catalyzes the demethylation of specific methylglutamate residues introduced into the chemoreceptors (methyl-accepting chemotaxis proteins or MCP) by CheR. Also mediates the irreversible deamidation of specific glutamine residues to glutamic acid. The chain is Protein-glutamate methylesterase/protein-glutamine glutaminase 2 from Burkholderia orbicola (strain AU 1054).